Consider the following 433-residue polypeptide: Serine--tRNA ligase (433 aa).

239–241 (TAE) contributes to the L-serine binding site. 270-272 (RSE) is a binding site for ATP. Glu-293 serves as a coordination point for L-serine. Residue 357–360 (EISS) coordinates ATP. Ser-393 contributes to the L-serine binding site.

Belongs to the class-II aminoacyl-tRNA synthetase family. Type-1 seryl-tRNA synthetase subfamily. In terms of assembly, homodimer. The tRNA molecule binds across the dimer.

It localises to the cytoplasm. The catalysed reaction is tRNA(Ser) + L-serine + ATP = L-seryl-tRNA(Ser) + AMP + diphosphate + H(+). The enzyme catalyses tRNA(Sec) + L-serine + ATP = L-seryl-tRNA(Sec) + AMP + diphosphate + H(+). Its pathway is aminoacyl-tRNA biosynthesis; selenocysteinyl-tRNA(Sec) biosynthesis; L-seryl-tRNA(Sec) from L-serine and tRNA(Sec): step 1/1. In terms of biological role, catalyzes the attachment of serine to tRNA(Ser). Is also able to aminoacylate tRNA(Sec) with serine, to form the misacylated tRNA L-seryl-tRNA(Sec), which will be further converted into selenocysteinyl-tRNA(Sec). The chain is Serine--tRNA ligase from Sorangium cellulosum (strain So ce56) (Polyangium cellulosum (strain So ce56)).